A 65-amino-acid polypeptide reads, in one-letter code: Large ribosomal subunit protein uL29 (65 aa).

Belongs to the universal ribosomal protein uL29 family.

The protein is Large ribosomal subunit protein uL29 of Acidithiobacillus ferrooxidans (strain ATCC 23270 / DSM 14882 / CIP 104768 / NCIMB 8455) (Ferrobacillus ferrooxidans (strain ATCC 23270)).